A 398-amino-acid polypeptide reads, in one-letter code: Phosphoglycerate kinase (398 aa).

Substrate is bound by residues 20 to 22 (DFN), Arg35, 58 to 61 (HLGK), Arg118, and Arg155. Residues Lys208, Gly296, Glu327, and 354-357 (GGDS) contribute to the ATP site.

Belongs to the phosphoglycerate kinase family. In terms of assembly, monomer.

The protein localises to the cytoplasm. It catalyses the reaction (2R)-3-phosphoglycerate + ATP = (2R)-3-phospho-glyceroyl phosphate + ADP. It participates in carbohydrate degradation; glycolysis; pyruvate from D-glyceraldehyde 3-phosphate: step 2/5. This Fusobacterium nucleatum subsp. nucleatum (strain ATCC 25586 / DSM 15643 / BCRC 10681 / CIP 101130 / JCM 8532 / KCTC 2640 / LMG 13131 / VPI 4355) protein is Phosphoglycerate kinase.